A 375-amino-acid chain; its full sequence is Chaperone protein DnaJ (375 aa).

One can recognise a J domain in the interval 5–68 (DYYEILGVSK…KKRAQYDQFG (64 aa)). A CR-type zinc finger spans residues 135–217 (GISKNINYDR…CYGKKVINER (83 aa)). Zn(2+) is bound by residues Cys-148, Cys-151, Cys-165, Cys-168, Cys-191, Cys-194, Cys-205, and Cys-208. CXXCXGXG motif repeat units follow at residues 148-155 (CHKCQGTG), 165-172 (CTKCHGRG), 191-198 (CHECEGTG), and 205-212 (CEQCYGKK).

It belongs to the DnaJ family. As to quaternary structure, homodimer. Requires Zn(2+) as cofactor.

It localises to the cytoplasm. Participates actively in the response to hyperosmotic and heat shock by preventing the aggregation of stress-denatured proteins and by disaggregating proteins, also in an autonomous, DnaK-independent fashion. Unfolded proteins bind initially to DnaJ; upon interaction with the DnaJ-bound protein, DnaK hydrolyzes its bound ATP, resulting in the formation of a stable complex. GrpE releases ADP from DnaK; ATP binding to DnaK triggers the release of the substrate protein, thus completing the reaction cycle. Several rounds of ATP-dependent interactions between DnaJ, DnaK and GrpE are required for fully efficient folding. Also involved, together with DnaK and GrpE, in the DNA replication of plasmids through activation of initiation proteins. This Ureaplasma parvum serovar 3 (strain ATCC 700970) protein is Chaperone protein DnaJ.